The primary structure comprises 399 residues: Elongation factor Tu (399 aa).

The region spanning 10–209 (KPHVNIGTIG…AVDSYIPTPT (200 aa)) is the tr-type G domain. A G1 region spans residues 19–26 (GHVDHGKT). GTP is bound at residue 19–26 (GHVDHGKT). Residue T26 participates in Mg(2+) binding. The G2 stretch occupies residues 60 to 64 (GITIA). The tract at residues 81-84 (DCPG) is G3. Residues 81 to 85 (DCPGH) and 136 to 139 (NKAD) each bind GTP. The G4 stretch occupies residues 136-139 (NKAD). Positions 174 to 176 (SAL) are G5.

The protein belongs to the TRAFAC class translation factor GTPase superfamily. Classic translation factor GTPase family. EF-Tu/EF-1A subfamily. In terms of assembly, monomer.

It localises to the cytoplasm. It carries out the reaction GTP + H2O = GDP + phosphate + H(+). In terms of biological role, GTP hydrolase that promotes the GTP-dependent binding of aminoacyl-tRNA to the A-site of ribosomes during protein biosynthesis. In Campylobacter jejuni (strain RM1221), this protein is Elongation factor Tu.